Reading from the N-terminus, the 221-residue chain is Carbonic anhydrase (221 aa).

Positions 57, 59, 112, and 115 each coordinate Zn(2+).

Belongs to the beta-class carbonic anhydrase family. The cofactor is Zn(2+).

It localises to the cytoplasm. Its subcellular location is the nucleus. It is found in the mitochondrion intermembrane space. The enzyme catalyses hydrogencarbonate + H(+) = CO2 + H2O. Catalyzes the reversible hydration of CO(2) to H(2)CO(3). The main role may be to provide inorganic carbon for the bicarbonate-dependent carboxylation reactions catalyzed by pyruvate carboxylase, acetyl-CoA carboxylase and carbamoyl-phosphate synthetase. Involved in protection against oxidative damage. Encodes a substrate for the non-classical protein export pathway for proteins that lack a cleavable signal sequence. The protein is Carbonic anhydrase (NCE103) of Saccharomyces cerevisiae (strain ATCC 204508 / S288c) (Baker's yeast).